We begin with the raw amino-acid sequence, 62 residues long: MTIAFQLAVFALIATSSILLISVPVVFASPDGWSSKKNVVFSGTSLWIGLVFLVGILNSLIY.

Transmembrane regions (helical) follow at residues 8–28 and 41–61; these read AVFA…VVFA and FSGT…NSLI.

Belongs to the PsbZ family. PSII is composed of 1 copy each of membrane proteins PsbA, PsbB, PsbC, PsbD, PsbE, PsbF, PsbH, PsbI, PsbJ, PsbK, PsbL, PsbM, PsbT, PsbY, PsbZ, Psb30/Ycf12, at least 3 peripheral proteins of the oxygen-evolving complex and a large number of cofactors. It forms dimeric complexes.

The protein resides in the plastid. It localises to the chloroplast thylakoid membrane. Its function is as follows. May control the interaction of photosystem II (PSII) cores with the light-harvesting antenna, regulates electron flow through the 2 photosystem reaction centers. PSII is a light-driven water plastoquinone oxidoreductase, using light energy to abstract electrons from H(2)O, generating a proton gradient subsequently used for ATP formation. This Nymphaea alba (White water-lily) protein is Photosystem II reaction center protein Z.